Consider the following 535-residue polypeptide: CTP synthase (535 aa).

The interval 1–267 (MTKYIFVTGG…DSLVCSHLKL (267 aa)) is amidoligase domain. Serine 13 contributes to the CTP binding site. Position 13 (serine 13) interacts with UTP. An ATP-binding site is contributed by 14-19 (SLGKGI). Tyrosine 54 is a binding site for L-glutamine. Aspartate 71 is an ATP binding site. Positions 71 and 141 each coordinate Mg(2+). CTP is bound by residues 148–150 (DIE), 188–193 (KTKPTQ), and lysine 224. UTP contacts are provided by residues 188-193 (KTKPTQ) and lysine 224. Residues 292–534 (TIALVGKYVE…VHASLKTSEK (243 aa)) form the Glutamine amidotransferase type-1 domain. Glycine 354 is an L-glutamine binding site. The active-site Nucleophile; for glutamine hydrolysis is the cysteine 381. Residues 382–385 (LGMQ), glutamate 405, and arginine 462 each bind L-glutamine. Catalysis depends on residues histidine 507 and glutamate 509.

It belongs to the CTP synthase family. In terms of assembly, homotetramer.

The enzyme catalyses UTP + L-glutamine + ATP + H2O = CTP + L-glutamate + ADP + phosphate + 2 H(+). It carries out the reaction L-glutamine + H2O = L-glutamate + NH4(+). The catalysed reaction is UTP + NH4(+) + ATP = CTP + ADP + phosphate + 2 H(+). It functions in the pathway pyrimidine metabolism; CTP biosynthesis via de novo pathway; CTP from UDP: step 2/2. Allosterically activated by GTP, when glutamine is the substrate; GTP has no effect on the reaction when ammonia is the substrate. The allosteric effector GTP functions by stabilizing the protein conformation that binds the tetrahedral intermediate(s) formed during glutamine hydrolysis. Inhibited by the product CTP, via allosteric rather than competitive inhibition. In terms of biological role, catalyzes the ATP-dependent amination of UTP to CTP with either L-glutamine or ammonia as the source of nitrogen. Regulates intracellular CTP levels through interactions with the four ribonucleotide triphosphates. The polypeptide is CTP synthase (Bacillus licheniformis (strain ATCC 14580 / DSM 13 / JCM 2505 / CCUG 7422 / NBRC 12200 / NCIMB 9375 / NCTC 10341 / NRRL NRS-1264 / Gibson 46)).